We begin with the raw amino-acid sequence, 186 residues long: Glutathione S-transferase 1, isoform A (186 aa).

The GST N-terminal domain maps to 1–81 (MDFYYLPGSA…YLVEKYCAHD (81 aa)). Residues Ser-9, 50–52 (HCI), and 65–67 (ESR) each bind glutathione. In terms of domain architecture, GST C-terminal spans 92 to 186 (DPRRRAVVHQ…RRCRVRSAAI (95 aa)).

It belongs to the GST superfamily. Theta family. As to quaternary structure, homodimer.

The enzyme catalyses RX + glutathione = an S-substituted glutathione + a halide anion + H(+). Conjugation of reduced glutathione to a wide number of exogenous and endogenous hydrophobic electrophiles. The protein is Glutathione S-transferase 1, isoform A of Anopheles gambiae (African malaria mosquito).